The primary structure comprises 1083 residues: Voltage-gated inwardly rectifying potassium channel KCNH3 (1083 aa).

The Cytoplasmic portion of the chain corresponds to 1–228 (MPAMRGLLAP…HCGALRATWD (228 aa)). The PAS domain maps to 18–90 (IATRFDGTHS…QQIRKALDEH (73 aa)). The PAC domain occupies 93–145 (FKAELILYRKSGLPFWCLLDVIPIKNEKGEVALFLVSHKDISETKNRGGPDRW). Basic and acidic residues predominate over residues 137–150 (KNRGGPDRWKETGG). Residues 137 to 157 (KNRGGPDRWKETGGGRRRYGR) form a disordered region. Residues 229–249 (GFILLATLYVAVTVPYSVCVS) form a helical membrane-spanning segment. Over 250–259 (TAREPSAARG) the chain is Extracellular. The helical transmembrane segment at 260–280 (PPSVCDLAVEVLFILDIVLNF) threads the bilayer. Residues 281–302 (RTTFVSKSGQVVFAPKSICLHY) are Cytoplasmic-facing. The helical transmembrane segment at 303-323 (VTTWFLLDVIAALPFDLLHAF) threads the bilayer. Residues 324 to 331 (KVNVYFGA) lie on the Extracellular side of the membrane. A helical; Voltage-sensor transmembrane segment spans residues 332–352 (HLLKTVRLLRLLRLLPRLDRY). The Cytoplasmic segment spans residues 353–361 (SQYSAVVLT). A helical transmembrane segment spans residues 362-382 (LLMAVFALLAHWVACVWFYIG). The Extracellular segment spans residues 383-453 (QREIESSESE…GGPSLRSAYI (71 aa)). Asn-421, Asn-428, and Asn-436 each carry an N-linked (GlcNAc...) asparagine glycan. An intramembrane region (pore-forming) is located at residues 454–474 (TSLYFALSSLTSVGFGNVSAN). Positions 465–470 (SVGFGN) match the Selectivity filter motif. Residues 475–479 (TDTEK) lie on the Extracellular side of the membrane. A helical membrane pass occupies residues 480 to 500 (IFSICTMLIGALMHAVVFGNV). Residues 501-1083 (TAIIQRMYAR…QWTQEEGTGV (583 aa)) are Cytoplasmic-facing. 582–697 (LFEAASRGCL…FAPRFSRGLR (116 aa)) is a binding site for a nucleoside 3',5'-cyclic phosphate. 3 disordered regions span residues 729–810 (EEKE…LRLP), 832–873 (CGSD…SEAR), and 972–1055 (MAPW…ALPW). The span at 773–785 (TAPRPRLGGRGRP) shows a compositional bias: basic residues. The segment covering 844–861 (GQSGPECSSSPSPGPESG) has biased composition (low complexity).

Belongs to the potassium channel family. H (Eag) (TC 1.A.1.20) subfamily. Kv12.2/KCNH3 sub-subfamily. As to quaternary structure, the potassium channel is probably composed of a homo- or heterotetrameric complex of pore-forming alpha subunits that can associate with modulating beta subunits. Interacts with KCNE1 and KCNE3; these interactions regulate KCNH3 trafficking to the plasma membrane and its subsequent voltage-gated potassium channel activity. N-glycosylated. N-glycosylation mediates traffick to the cell membrane but is not necessary for voltage-gated potassium channel activity. In terms of tissue distribution, detected only in brain, in particular in the telencephalon. Detected in the cerebral cortex, occipital pole, frontal and temporal lobe, putamen, amygdala, hippocampus and caudate nucleus.

It is found in the cell membrane. It carries out the reaction K(+)(in) = K(+)(out). In terms of biological role, pore-forming (alpha) subunit of a voltage-gated inwardly rectifying potassium channel. Charactherized by a fast rate of activation during depolarization followed by a rapid inactivation at much more depolarized value causing inward rectification due to a C-type inactivation mechanism. Exhibits a rapid recovery from inactivation. The protein is Voltage-gated inwardly rectifying potassium channel KCNH3 of Homo sapiens (Human).